The sequence spans 481 residues: Cardiolipin synthase A (481 aa).

Helical transmembrane passes span 10 to 30 and 40 to 60; these read FFGYLLGLIHLLGIVAALHAL and IAWAMPLLFIPYLTLIPYLIF. 2 consecutive PLD phosphodiesterase domains span residues 220-247 and 394-421; these read VNFRNHRKIVVVDGLLGFIGGHNVGDEY and QPGFLHQKVVLVDDDVSAIGSANLDNRS. Catalysis depends on residues His225, Lys227, Asp232, His399, Lys401, and Asp406.

The protein belongs to the phospholipase D family. Cardiolipin synthase subfamily. ClsA sub-subfamily.

The protein resides in the cell inner membrane. The enzyme catalyses 2 a 1,2-diacyl-sn-glycero-3-phospho-(1'-sn-glycerol) = a cardiolipin + glycerol. Its function is as follows. Catalyzes the reversible phosphatidyl group transfer from one phosphatidylglycerol molecule to another to form cardiolipin (CL) (diphosphatidylglycerol) and glycerol. This Pseudomonas putida (strain ATCC 47054 / DSM 6125 / CFBP 8728 / NCIMB 11950 / KT2440) protein is Cardiolipin synthase A.